We begin with the raw amino-acid sequence, 495 residues long: F(420)H(2) dehydrogenase subunit M (495 aa).

15 helical membrane-spanning segments follow: residues 1 to 21 (MLPVASLLILVPLIFAVVTFF), 27 to 47 (LAAGFGFLGSLATLGLTLYAY), 57 to 77 (MQFYESVSWIPFLGVNYSVGI), 80 to 100 (VSMPLILLNAIVIPFMILFTW), 108 to 128 (NRFYGLILTMQAAVIGVFVAL), 130 to 150 (FVVFYIFWELTLVPLFFIVNL), 163 to 183 (FFIYTHVASLVMLLGIFGLFY), 215 to 235 (IFLAILFGFLAKLPAFPFHSW), 249 to 269 (ILFILLKIGGYGLFRISLPML), 277 to 297 (LMIMILGLLGSVSILYGALLA), 315 to 335 (MGYVILGSAGLVTLSVSGAMF), 338 to 358 (FSHGLIMSIMFMSAGAIQTAA), 378 to 398 (VAMMVGFMASLGLPGLTGFIA), 412 to 432 (VFVVIALLAIVVTAGYHLWAM), and 450 to 470 (INSIQVFSMAVIALLVLYFGL).

Belongs to the complex I subunit 4 family. In terms of assembly, the FPO complex is composed of at least 13 different subunits. FpoA, FpoH, FpoJ, FpoK, FpoL, FpoM and FpoN proteins constitute the membrane sector of the complex.

The protein resides in the cell membrane. It catalyses the reaction methanophenazine + reduced coenzyme F420-(gamma-L-Glu)(n) = dihydromethanophenazine + oxidized coenzyme F420-(gamma-L-Glu)(n) + H(+). In terms of biological role, component of the F(420)H(2) dehydrogenase (FPO complex) which is part of the energy-conserving F(420)H(2):heterodisulfide oxidoreductase system. The membrane-bound electron transfer system of the complex plays an important role in the metabolism of methylotrophic methanogens when the organisms grow on methanol or methylamines. Catalyzes the oxidation of methanophenazine to dihydromethanophenazine. It shuttles electrons from F(420)H(2), via FAD and iron-sulfur (Fe-S) centers, to methanophenazine (an electron carrier in the membrane). It couples the redox reaction to proton translocation (for every two electrons transferred, two hydrogen ions are translocated across the cytoplasmic membrane), and thus conserves the redox energy in a proton gradient. It also catalyzes the oxidation of F(420)H(2) with quinones such as 2,3-dimethyl-1,4-naphthoquinone, 2-methyl-1,4-naphthoquinone and tetramethyl-p-benzoquinone. The sequence is that of F(420)H(2) dehydrogenase subunit M (fpoM) from Methanosarcina mazei (strain ATCC BAA-159 / DSM 3647 / Goe1 / Go1 / JCM 11833 / OCM 88) (Methanosarcina frisia).